The chain runs to 289 residues: Bidirectional sugar transporter SWEET10 (289 aa).

Topologically, residues 1-5 are extracellular; it reads MAISQ. A helical transmembrane segment spans residues 6-26; it reads AVLATVFGILGNIISFFVCLA. In terms of domain architecture, MtN3/slv 1 spans 11–96; sequence VFGILGNIIS…SLFFFYAPKK (86 aa). Topologically, residues 27–43 are cytoplasmic; sequence PIPTFVRIYKRKSSEGY. The chain crosses the membrane as a helical span at residues 44-64; the sequence is QSIPYVISLFSAMLWMYYAMI. Topologically, residues 65 to 70 are extracellular; it reads KKDAMM. Residues 71-91 form a helical membrane-spanning segment; that stretch reads LITINSFAFVVQIVYISLFFF. The Cytoplasmic portion of the chain corresponds to 92 to 103; it reads YAPKKEKTLTVK. Residues 104-124 traverse the membrane as a helical segment; the sequence is FVLFVDVLGFGAIFVLTYFII. Topologically, residues 125 to 131 are extracellular; that stretch reads HANKRVQ. One can recognise a MtN3/slv 2 domain in the interval 131 to 214; that stretch reads QVLGYICMVF…QMILFLIYKK (84 aa). The chain crosses the membrane as a helical span at residues 132 to 152; that stretch reads VLGYICMVFALSVFVAPLGII. Topologically, residues 153–165 are cytoplasmic; sequence RKVIKTKSAEFMP. The helical transmembrane segment at 166-186 threads the bilayer; the sequence is FGLSFFLTLSAVMWFFYGLLL. At 187 to 190 the chain is on the extracellular side; that stretch reads KDMN. A helical transmembrane segment spans residues 191–211; the sequence is IALPNVLGFIFGVLQMILFLI. At 212-289 the chain is on the cytoplasmic side; the sequence is YKKPGTKVLE…EKEVFLISKN (78 aa).

It belongs to the SWEET sugar transporter family. Forms heterooligomers with SWEET8.

It localises to the cell membrane. Mediates both low-affinity uptake and efflux of sugar across the plasma membrane. This is Bidirectional sugar transporter SWEET10 from Arabidopsis thaliana (Mouse-ear cress).